Reading from the N-terminus, the 165-residue chain is 3-hydroxyacyl-[acyl-carrier-protein] dehydratase FERN, mitochondrial (165 aa).

A mitochondrion-targeting transit peptide spans 1-35 (MLMKRLFSSSHVFSSSSASSNLLKIGSVLKQARTF). A MaoC-like domain is found at 36–124 (ADDDVLGYSK…AVSIRQIKNK (89 aa)).

As to quaternary structure, homodimer.

It is found in the mitochondrion. It carries out the reaction a (3R)-hydroxyacyl-[ACP] = a (2E)-enoyl-[ACP] + H2O. It functions in the pathway lipid metabolism; fatty acid biosynthesis. Its function is as follows. 3-hydroxyl-[acyl-carrier-protein] (3-hydroxyl-ACP) dehydratase required for mitochondrial fatty acid synthesis (mtFAS). Essential for photorespiration, tomato morphogenesis and plant development, probably by influencing mitochondrial membrane lipid composition and other lipid metabolic pathways, and by contributing to energy supply and reactive oxygen species (ROS) homeostasis. The protein is 3-hydroxyacyl-[acyl-carrier-protein] dehydratase FERN, mitochondrial of Solanum lycopersicum (Tomato).